Consider the following 155-residue polypeptide: Large ribosomal subunit protein uL30 (155 aa).

Belongs to the universal ribosomal protein uL30 family. In terms of assembly, part of the 50S ribosomal subunit.

The protein is Large ribosomal subunit protein uL30 of Nanoarchaeum equitans (strain Kin4-M).